Consider the following 266-residue polypeptide: Probable phosphoadenosine phosphosulfate reductase (266 aa).

Residues 219-246 (TQPVREGEDERAGRWRGREKTECGLHSH) are disordered. Positions 223–243 (REGEDERAGRWRGREKTECGL) are enriched in basic and acidic residues.

The protein belongs to the PAPS reductase family. CysH subfamily.

The protein resides in the cytoplasm. Its subcellular location is the nucleus. The enzyme catalyses [thioredoxin]-disulfide + sulfite + adenosine 3',5'-bisphosphate + 2 H(+) = [thioredoxin]-dithiol + 3'-phosphoadenylyl sulfate. It participates in sulfur metabolism; hydrogen sulfide biosynthesis; sulfite from sulfate: step 3/3. Functionally, the NADP dependent reduction of PAPS into sulfite involves thioredoxin which probably plays the role of a thiol carrier. Required for methionine synthesis. This is Probable phosphoadenosine phosphosulfate reductase (met16) from Schizosaccharomyces pombe (strain 972 / ATCC 24843) (Fission yeast).